A 233-amino-acid chain; its full sequence is Probable chemoreceptor glutamine deamidase CheD (233 aa).

This sequence belongs to the CheD family.

It catalyses the reaction L-glutaminyl-[protein] + H2O = L-glutamyl-[protein] + NH4(+). Functionally, probably deamidates glutamine residues to glutamate on methyl-accepting chemotaxis receptors (MCPs), playing an important role in chemotaxis. The chain is Probable chemoreceptor glutamine deamidase CheD from Vibrio cholerae serotype O1 (strain ATCC 39315 / El Tor Inaba N16961).